Reading from the N-terminus, the 61-residue chain is Small ribosomal subunit protein uS14 (61 aa).

4 residues coordinate Zn(2+): Cys24, Cys27, Cys40, and Cys43.

It belongs to the universal ribosomal protein uS14 family. Zinc-binding uS14 subfamily. In terms of assembly, part of the 30S ribosomal subunit. Contacts proteins S3 and S10. It depends on Zn(2+) as a cofactor.

In terms of biological role, binds 16S rRNA, required for the assembly of 30S particles and may also be responsible for determining the conformation of the 16S rRNA at the A site. The protein is Small ribosomal subunit protein uS14 of Desulfovibrio desulfuricans (strain ATCC 27774 / DSM 6949 / MB).